Reading from the N-terminus, the 213-residue chain is MSEAERKMQFLYALRSKGVTDKRVLSAMENIDRGPFIRGIFAERAYEDMPLPIACGQTISQPSVVGLMTQALKISPRDKVLEVGTGSGYQAAILSRLARRVYTLDRHSRLVREARTLFEEMNLTNITAITADGSYGLADQAPFDRILVTAAAEDPPSTLMEQLKVGGIMVIPVGQSDAVQHLIVVHKTEDGLEYDELRQVRFVPLLEGLGKDG.

Residue S60 is part of the active site.

The protein belongs to the methyltransferase superfamily. L-isoaspartyl/D-aspartyl protein methyltransferase family.

The protein localises to the cytoplasm. It carries out the reaction [protein]-L-isoaspartate + S-adenosyl-L-methionine = [protein]-L-isoaspartate alpha-methyl ester + S-adenosyl-L-homocysteine. Functionally, catalyzes the methyl esterification of L-isoaspartyl residues in peptides and proteins that result from spontaneous decomposition of normal L-aspartyl and L-asparaginyl residues. It plays a role in the repair and/or degradation of damaged proteins. In Roseobacter denitrificans (strain ATCC 33942 / OCh 114) (Erythrobacter sp. (strain OCh 114)), this protein is Protein-L-isoaspartate O-methyltransferase.